We begin with the raw amino-acid sequence, 480 residues long: Dihydrolipoyllysine-residue acetyltransferase component 4 of pyruvate dehydrogenase complex, chloroplastic (480 aa).

Residues methionine 1–serine 53 constitute a chloroplast transit peptide. The region spanning isoleucine 55–glutamate 133 is the Lipoyl-binding domain. Lysine 96 carries the N6-lipoyllysine modification. Disordered stretches follow at residues lysine 140–proline 168 and alanine 224–alanine 245. Over residues lysine 142–valine 156 the composition is skewed to low complexity. The 38-residue stretch at valine 187 to alanine 224 folds into the Peripheral subunit-binding (PSBD) domain. Residues alanine 234 to valine 243 show a composition bias toward pro residues. Residue histidine 453 is part of the active site.

The protein belongs to the 2-oxoacid dehydrogenase family. (R)-lipoate is required as a cofactor.

Its subcellular location is the plastid. The protein localises to the chloroplast stroma. The catalysed reaction is N(6)-[(R)-dihydrolipoyl]-L-lysyl-[protein] + acetyl-CoA = N(6)-[(R)-S(8)-acetyldihydrolipoyl]-L-lysyl-[protein] + CoA. In terms of biological role, the pyruvate dehydrogenase complex catalyzes the overall conversion of pyruvate to acetyl-CoA and CO(2). It contains multiple copies of three enzymatic components: pyruvate dehydrogenase (E1), dihydrolipoamide acetyltransferase (E2) and lipoamide dehydrogenase (E3). The chain is Dihydrolipoyllysine-residue acetyltransferase component 4 of pyruvate dehydrogenase complex, chloroplastic (LTA2) from Arabidopsis thaliana (Mouse-ear cress).